Consider the following 95-residue polypeptide: 1,2-phenylacetyl-CoA epoxidase, subunit B (95 aa).

Homotrimer. Forms a stable heterodimer with PaaC. Probably forms an oligomer with PaaAC.

It functions in the pathway aromatic compound metabolism; phenylacetate degradation. In terms of biological role, component of 1,2-phenylacetyl-CoA epoxidase multicomponent enzyme system which catalyzes the reduction of phenylacetyl-CoA (PA-CoA) to form 1,2-epoxyphenylacetyl-CoA. The subunit B may play a regulatory role or be directly involved in electron transport. In Escherichia coli (strain K12), this protein is 1,2-phenylacetyl-CoA epoxidase, subunit B (paaB).